A 480-amino-acid polypeptide reads, in one-letter code: Aspartyl/glutamyl-tRNA(Asn/Gln) amidotransferase subunit B (480 aa).

The protein belongs to the GatB/GatE family. GatB subfamily. Heterotrimer of A, B and C subunits.

It catalyses the reaction L-glutamyl-tRNA(Gln) + L-glutamine + ATP + H2O = L-glutaminyl-tRNA(Gln) + L-glutamate + ADP + phosphate + H(+). The enzyme catalyses L-aspartyl-tRNA(Asn) + L-glutamine + ATP + H2O = L-asparaginyl-tRNA(Asn) + L-glutamate + ADP + phosphate + 2 H(+). Its function is as follows. Allows the formation of correctly charged Asn-tRNA(Asn) or Gln-tRNA(Gln) through the transamidation of misacylated Asp-tRNA(Asn) or Glu-tRNA(Gln) in organisms which lack either or both of asparaginyl-tRNA or glutaminyl-tRNA synthetases. The reaction takes place in the presence of glutamine and ATP through an activated phospho-Asp-tRNA(Asn) or phospho-Glu-tRNA(Gln). The sequence is that of Aspartyl/glutamyl-tRNA(Asn/Gln) amidotransferase subunit B from Streptococcus agalactiae serotype Ia (strain ATCC 27591 / A909 / CDC SS700).